The sequence spans 78 residues: DNA-directed RNA polymerase subunit omega (78 aa).

Belongs to the RNA polymerase subunit omega family. As to quaternary structure, the RNAP catalytic core consists of 2 alpha, 1 beta, 1 beta' and 1 omega subunit. When a sigma factor is associated with the core the holoenzyme is formed, which can initiate transcription.

The catalysed reaction is RNA(n) + a ribonucleoside 5'-triphosphate = RNA(n+1) + diphosphate. In terms of biological role, promotes RNA polymerase assembly. Latches the N- and C-terminal regions of the beta' subunit thereby facilitating its interaction with the beta and alpha subunits. The protein is DNA-directed RNA polymerase subunit omega of Desulfovibrio desulfuricans (strain ATCC 27774 / DSM 6949 / MB).